We begin with the raw amino-acid sequence, 495 residues long: Ectonucleoside triphosphate diphosphohydrolase 8 (495 aa).

The Cytoplasmic segment spans residues 1-8; it reads MGLSRKEQ. The chain crosses the membrane as a helical span at residues 9-29; that stretch reads VFLALLGASGVSGLTALILLL. At 30–471 the chain is on the extracellular side; it reads VEATSVLLPT…AESYGVWVAK (442 aa). N-linked (GlcNAc...) asparagine glycosylation is present at Asn-67. The cysteines at positions 78 and 102 are disulfide-linked. The active-site Proton acceptor is the Glu-168. Cys-246 and Cys-292 are joined by a disulfide. Asn-304 is a glycosylation site (N-linked (GlcNAc...) asparagine). Cys-329 and Cys-335 are joined by a disulfide. Residue Asn-363 is glycosylated (N-linked (GlcNAc...) asparagine). The cysteines at positions 381 and 403 are disulfide-linked. Residues 472-492 traverse the membrane as a helical segment; that stretch reads VVFMVLALVAVVGAALVQLFW. Topologically, residues 493 to 495 are cytoplasmic; sequence LQD.

It belongs to the GDA1/CD39 NTPase family. Ca(2+) is required as a cofactor. It depends on Mg(2+) as a cofactor. Post-translationally, N-glycosylated.

The protein localises to the cell membrane. It carries out the reaction a ribonucleoside 5'-triphosphate + 2 H2O = a ribonucleoside 5'-phosphate + 2 phosphate + 2 H(+). With respect to regulation, not inhibited by ARL 67156. In terms of biological role, canalicular ectonucleoside NTPDase responsible for the main hepatic NTPDase activity. Ectonucleoside NTPDases catalyze the hydrolysis of gamma- and beta-phosphate residues of nucleotides, playing a central role in concentration of extracellular nucleotides. Has activity toward ATP, ADP, UTP and UDP, but not toward AMP. This chain is Ectonucleoside triphosphate diphosphohydrolase 8 (ENTPD8), found in Homo sapiens (Human).